A 287-amino-acid polypeptide reads, in one-letter code: Protease HtpX (287 aa).

2 helical membrane-spanning segments follow: residues 4 to 24 (IFLL…VMSI) and 33 to 53 (GGLL…SLAI). Residue H139 coordinates Zn(2+). The active site involves E140. A Zn(2+)-binding site is contributed by H143. 2 helical membrane-spanning segments follow: residues 154–174 (LIQG…AGII) and 195–215 (AVVF…VAYF). Residue E220 coordinates Zn(2+).

Belongs to the peptidase M48B family. The cofactor is Zn(2+).

It is found in the cell inner membrane. The polypeptide is Protease HtpX (Shewanella halifaxensis (strain HAW-EB4)).